The following is a 504-amino-acid chain: MSDKYIMAIDEGTTSTRAIIFDKKGNKVAEGQKEFRQYFPQPGWVEHDANEIWNAVLSTIANSFISSGIQPKQIAGIGITNQRETTIIWDKETGLPIYNAIVWQSRQTSDIAQKLIDEGYSDTIHEKTGLIIDAYFSATKIRWILDHVEGAQERAEKGELLFGTIDTWLTWKLTGGKVHVTDYSNASRTMLFNIHDLKWDKEILELLNIPEALLPEVKGNSEIYGQTAAYHFFGSQVPISGMAGDQQSALFGQLALEDGTVKNTYGTGSFIVMNTGNKPVLSKNNLLTTIGYSIDGKINFALEGSVFVSGSALQWLRDSMEIIESAPESERAANESTNHNEVYVVPAFTGLGAPYWDSDARGAVFGLTRGTTKNDFIKATLQSLAYQTRDVLDTMEKDTGIKIPVLRVDGGAAMNNYLLQFQSDLLNKSVERAGNLETTALGVAFLAGLAVGFWKDTDELKELFTVGRRFEPEMSDDAREYLYAGWKNAVEATRIFKHKINENL.

Thr13 contributes to the ADP binding site. ATP-binding residues include Thr13, Thr14, and Ser15. Thr13 provides a ligand contact to sn-glycerol 3-phosphate. Arg17 lines the ADP pocket. The sn-glycerol 3-phosphate site is built by Arg83, Glu84, and Tyr135. Arg83, Glu84, and Tyr135 together coordinate glycerol. At His231 the chain carries Phosphohistidine; by HPr. Asp245 is a sn-glycerol 3-phosphate binding site. Glycerol contacts are provided by Asp245 and Gln246. ADP is bound by residues Thr267 and Gly310. ATP is bound by residues Thr267, Gly310, Gln314, and Gly411. ADP is bound by residues Gly411 and Asn415.

Belongs to the FGGY kinase family. In terms of assembly, homotetramer and homodimer (in equilibrium). The phosphoenolpyruvate-dependent sugar phosphotransferase system (PTS), including enzyme I, and histidine-containing protein (HPr) are required for the phosphorylation, which leads to the activation of the enzyme.

It catalyses the reaction glycerol + ATP = sn-glycerol 3-phosphate + ADP + H(+). It participates in polyol metabolism; glycerol degradation via glycerol kinase pathway; sn-glycerol 3-phosphate from glycerol: step 1/1. Its activity is regulated as follows. Activated by phosphorylation and inhibited by fructose 1,6-bisphosphate (FBP). In terms of biological role, key enzyme in the regulation of glycerol uptake and metabolism. Catalyzes the phosphorylation of glycerol to yield sn-glycerol 3-phosphate. This is Glycerol kinase from Ligilactobacillus salivarius (strain UCC118) (Lactobacillus salivarius).